We begin with the raw amino-acid sequence, 249 residues long: Vacuolar iron transporter 1 (249 aa).

Topologically, residues 1–36 (MADGANDGGNPGAEEQQRLLDQHKEAHFTAGEIVRD) are cytoplasmic. The chain crosses the membrane as a helical span at residues 37–57 (IIIGVSDGLTVPFALAAGLSG). Residues 58–63 (ANASSS) lie on the Vacuolar side of the membrane. Residues 64 to 84 (IVLTAGIAEVAAGAISMGLGG) form a helical membrane-spanning segment. The Cytoplasmic segment spans residues 85–170 (YLAAKSEADN…PKRALQSAFT (86 aa)). Residues 90 to 165 (SEADNYAREL…LEKPDPKRAL (76 aa)) form a cytoplasmic metal binding domain (MBD) region. Residues E102, E105, E113, E116, M149, and E153 each coordinate Fe cation. Residues 171-191 (IAIAYVLGGLVPLIPYMFIPV) form a helical membrane-spanning segment. Topologically, residues 192–194 (ARK) are vacuolar. Residues 195 to 215 (AVVASVILTLMALLIFGYAKG) form a helical membrane-spanning segment. The Cytoplasmic portion of the chain corresponds to 216-226 (YFTDNKPFKSA). The helical transmembrane segment at 227-247 (LQTALIGAIASAAAFGMAKAV) threads the bilayer. The Vacuolar segment spans residues 248–249 (QS).

This sequence belongs to the CCC1 family. Homodimer. The dimeric interaction is mediated by both the transmembrane domains (TMDs) and the cytoplasmic metal binding domain (MBD).

It localises to the vacuole membrane. The catalysed reaction is Fe(2+)(in) = Fe(2+)(out). With respect to regulation, transport of iron ions is inhibited by zinc ions. Its function is as follows. Vacuolar iron transporter involved in the transfer of iron ions from the cytosol to the vacuole for intracellular iron storage. Can transport cobalt ions from the cytosol to the vacuole. This Eucalyptus grandis (Flooded gum) protein is Vacuolar iron transporter 1.